The primary structure comprises 453 residues: uncharacterized protein (453 aa).

[4Fe-4S] cluster-binding residues include C74, C80, C83, and C162. S-adenosyl-L-methionine-binding residues include Q286, Y315, E336, and D384. Catalysis depends on C411, which acts as the Nucleophile.

It belongs to the class I-like SAM-binding methyltransferase superfamily. RNA M5U methyltransferase family.

This is an uncharacterized protein from Staphylococcus aureus (strain MW2).